The primary structure comprises 496 residues: probable leucine aminopeptidase 2 (496 aa).

Residues 1-16 (MRSLLWASLLSGVLAG) form the signal peptide. One can recognise a PA domain in the interval 111–205 (PSVEVTADVA…SLEDGQKLIK (95 aa)). Asn-224 carries N-linked (GlcNAc...) asparagine glycosylation. Positions 248 and 260 each coordinate Zn(2+). The Proton acceptor role is filled by Glu-292. Glu-293 provides a ligand contact to Zn(2+). N-linked (GlcNAc...) asparagine glycosylation occurs at Asn-307. Residue Asp-321 coordinates Zn(2+). Asn-341 and Asn-402 each carry an N-linked (GlcNAc...) asparagine glycan. His-419 is a binding site for Zn(2+). 2 N-linked (GlcNAc...) asparagine glycosylation sites follow: Asn-424 and Asn-458. Positions 475–496 (KRAPKTHAHVSGSGCWHSQVEA) are disordered.

The protein belongs to the peptidase M28 family. M28A subfamily. Monomer. Zn(2+) is required as a cofactor.

It is found in the secreted. In terms of biological role, extracellular aminopeptidase that releases a wide variety of amino acids from natural peptides. The protein is probable leucine aminopeptidase 2 (lap2) of Aspergillus oryzae (strain ATCC 42149 / RIB 40) (Yellow koji mold).